The primary structure comprises 63 residues: Large ribosomal subunit protein bL28 (63 aa).

Belongs to the bacterial ribosomal protein bL28 family.

This is Large ribosomal subunit protein bL28 from Geobacter sulfurreducens (strain ATCC 51573 / DSM 12127 / PCA).